Reading from the N-terminus, the 439-residue chain is MEGGLRTGRLPKAPELSLQSFPSEWSWVWTYPLFHKLAAFACHASQAWLTVGITSESREGPNGLLDTLASLYHTSSTSEQKQMTVLVHLADSDPTWLRRTIIRISSLYRSQILTGQLLLIHAPPDAYPAVNDAQNKVSRGQIYSKQNVDHAFLMSFATKLSTYFLLIEDNVFCAPNFVNHIRSKVGYRKPNTWVLLEFSNMGFLGKLLHSRDLPLLAHFLLLFHKERPLNWLLLHFRTLLGQQSSILCRPFLFYHRLTHLTFENKTLIGHEKDPPDPYTLSGTVYTDMRFSDTHSPQEAYTLDESFFWSYNVTTGNYLTVILNNPANLNRVQVRTGSITDGKYILEKGQVELGYDPEGTPPQCTSFTLLGRLVQGQMDQFILESIGYKVSCVKLAVNANQVGGLMIRHIYIWGENAKNRKDVQIDNDDDDDDDDYDDDS.

It functions in the pathway protein modification; protein glycosylation. In terms of biological role, glycosyltransferase-like protein that may participate in the transfer of N-acetylglucosamine (GlcNAc) to the core mannose residues of N-linked glycans. The chain is Alpha-1,3-mannosyl-glycoprotein 4-beta-N-acetylglucosaminyltransferase-like protein MGAT4E from Mus musculus (Mouse).